The following is a 135-amino-acid chain: UPF0738 protein Aflv_2116 (135 aa).

It belongs to the UPF0738 family.

The sequence is that of UPF0738 protein Aflv_2116 from Anoxybacillus flavithermus (strain DSM 21510 / WK1).